A 718-amino-acid polypeptide reads, in one-letter code: Tegument protein UL46 (718 aa).

Disordered regions lie at residues 433 to 510 (SAGP…EPPA) and 581 to 611 (TADDDDDDARRKATHAASARERHAPYEDDES). Residues 444 to 454 (GPGGHRAGGGT) show a composition bias toward gly residues. The span at 455-467 (CREKIQRARRDNE) shows a compositional bias: basic and acidic residues.

Belongs to the herpesviridae HHV-1 VP11/12 protein family. Interacts with VP16. Interacts with host LCK, PIK3R1, SHC1 AND GRB2; these interactions promote the activation of the PI3K/AKT pathway. Interacts with host YWHAB. Interacts with ICP0; this interaction targets UL46 for degradation by the proteasome. Interacts (via N-terminus) with host TMEM173. Interacts (via C-terminus) with host TBK1. Interacts with host DOK2. Post-translationally, phosphorylated by host LCK. The phosphorylation seems to be lymphocyte-specific.

The protein resides in the virion tegument. It is found in the host cytoplasm. It localises to the host cell membrane. Plays a role in the activation of the host PI3K/AKT pathway to promote cell survival. Interacts with and activates host LCK and thereby recruits downstream partners SHC1, GRB2 and PI3KR1 in order to activate the PI3K pathway by phosphorylating host AKT on its activating residues. This mechanism is inhibited by the viral protein US3 that instead promotes incorporation of UL46 into virions. Plays a role in the inhibition of TMEM173/STING-mediated type I interferon production. Interacts with host DOK2 and induces its degradation. This immune evasion mechanism to inactivate T-cells may play an important role during pathogenesis. This chain is Tegument protein UL46, found in Homo sapiens (Human).